The primary structure comprises 510 residues: NAD(P)H-quinone oxidoreductase subunit 2 B, chloroplastic (510 aa).

Transmembrane regions (helical) follow at residues 24–44 (LLLF…GLIL), 57–77 (IPWL…SLLF), 99–119 (IFQF…VEYI), 124–144 (MAIT…MFLC), 149–169 (LITI…LSGY), 183–203 (YLLM…WLYG), 227–247 (PGIS…LSPA), 295–315 (WHLL…LIAI), 323–343 (MLAY…IVGD), 354–374 (YMLF…LFGL), 395–415 (ALSL…AGFF), 418–438 (LYLF…IGLL), and 484–504 (MIVC…IIAI).

The protein belongs to the complex I subunit 2 family. In terms of assembly, NDH is composed of at least 16 different subunits, 5 of which are encoded in the nucleus.

Its subcellular location is the plastid. The protein resides in the chloroplast thylakoid membrane. The enzyme catalyses a plastoquinone + NADH + (n+1) H(+)(in) = a plastoquinol + NAD(+) + n H(+)(out). It catalyses the reaction a plastoquinone + NADPH + (n+1) H(+)(in) = a plastoquinol + NADP(+) + n H(+)(out). Functionally, NDH shuttles electrons from NAD(P)H:plastoquinone, via FMN and iron-sulfur (Fe-S) centers, to quinones in the photosynthetic chain and possibly in a chloroplast respiratory chain. The immediate electron acceptor for the enzyme in this species is believed to be plastoquinone. Couples the redox reaction to proton translocation, and thus conserves the redox energy in a proton gradient. The sequence is that of NAD(P)H-quinone oxidoreductase subunit 2 B, chloroplastic from Lactuca sativa (Garden lettuce).